A 239-amino-acid polypeptide reads, in one-letter code: Octanoyltransferase (239 aa).

The BPL/LPL catalytic domain maps to 48 to 236; it reads DGGDELVWLV…AFEAVFGETT (189 aa). Substrate is bound by residues 87-94, 167-169, and 180-182; these read RGGEYTYH, ALG, and GLS. Cysteine 198 acts as the Acyl-thioester intermediate in catalysis.

Belongs to the LipB family.

The protein localises to the cytoplasm. It catalyses the reaction octanoyl-[ACP] + L-lysyl-[protein] = N(6)-octanoyl-L-lysyl-[protein] + holo-[ACP] + H(+). It participates in protein modification; protein lipoylation via endogenous pathway; protein N(6)-(lipoyl)lysine from octanoyl-[acyl-carrier-protein]: step 1/2. Catalyzes the transfer of endogenously produced octanoic acid from octanoyl-acyl-carrier-protein onto the lipoyl domains of lipoate-dependent enzymes. Lipoyl-ACP can also act as a substrate although octanoyl-ACP is likely to be the physiological substrate. This Rhizobium johnstonii (strain DSM 114642 / LMG 32736 / 3841) (Rhizobium leguminosarum bv. viciae) protein is Octanoyltransferase.